A 110-amino-acid polypeptide reads, in one-letter code: MIKSELVARLAQANPHLYQRDVERIVSTIFDEISAALARGDRVELRGFGAFSVKSRPARTGRNPRTGEPVHVDEKSVPFFKTGKELRERLNNADIADDKLMVDDSDDGDD.

It belongs to the bacterial histone-like protein family. In terms of assembly, heterodimer of an alpha and a beta chain.

Functionally, this protein is one of the two subunits of integration host factor, a specific DNA-binding protein that functions in genetic recombination as well as in transcriptional and translational control. The protein is Integration host factor subunit beta of Parvibaculum lavamentivorans (strain DS-1 / DSM 13023 / NCIMB 13966).